The sequence spans 398 residues: Bifunctional enzyme IspD/IspF (398 aa).

A 2-C-methyl-D-erythritol 4-phosphate cytidylyltransferase region spans residues 1–234 (MTNSPRTAAI…SRLMAALGDI (234 aa)). A 2-C-methyl-D-erythritol 2,4-cyclodiphosphate synthase region spans residues 235–398 (RTGTGYDVHA…LPWGADGLAG (164 aa)). 2 residues coordinate a divalent metal cation: D241 and H243. 4-CDP-2-C-methyl-D-erythritol 2-phosphate is bound by residues 241-243 (DVH) and 267-268 (HS). Residue H275 participates in a divalent metal cation binding. Residues 289–291 (DIG), 365–368 (TTSE), F372, and R375 contribute to the 4-CDP-2-C-methyl-D-erythritol 2-phosphate site.

This sequence in the N-terminal section; belongs to the IspD/TarI cytidylyltransferase family. IspD subfamily. In the C-terminal section; belongs to the IspF family. The cofactor is a divalent metal cation.

The enzyme catalyses 2-C-methyl-D-erythritol 4-phosphate + CTP + H(+) = 4-CDP-2-C-methyl-D-erythritol + diphosphate. It catalyses the reaction 4-CDP-2-C-methyl-D-erythritol 2-phosphate = 2-C-methyl-D-erythritol 2,4-cyclic diphosphate + CMP. Its pathway is isoprenoid biosynthesis; isopentenyl diphosphate biosynthesis via DXP pathway; isopentenyl diphosphate from 1-deoxy-D-xylulose 5-phosphate: step 2/6. It participates in isoprenoid biosynthesis; isopentenyl diphosphate biosynthesis via DXP pathway; isopentenyl diphosphate from 1-deoxy-D-xylulose 5-phosphate: step 4/6. In terms of biological role, bifunctional enzyme that catalyzes the formation of 4-diphosphocytidyl-2-C-methyl-D-erythritol from CTP and 2-C-methyl-D-erythritol 4-phosphate (MEP) (IspD), and catalyzes the conversion of 4-diphosphocytidyl-2-C-methyl-D-erythritol 2-phosphate (CDP-ME2P) to 2-C-methyl-D-erythritol 2,4-cyclodiphosphate (ME-CPP) with a corresponding release of cytidine 5-monophosphate (CMP) (IspF). In Rhodopseudomonas palustris (strain TIE-1), this protein is Bifunctional enzyme IspD/IspF.